The following is a 276-amino-acid chain: Formamidopyrimidine-DNA glycosylase (276 aa).

Proline 2 acts as the Schiff-base intermediate with DNA in catalysis. Residue glutamate 3 is the Proton donor of the active site. Lysine 60 functions as the Proton donor; for beta-elimination activity in the catalytic mechanism. 2 residues coordinate DNA: histidine 93 and arginine 112. An FPG-type zinc finger spans residues 240-274 (NVYGKKGEPCVTCGTILEKTVVGGRGTHYCPICQP). Arginine 264 functions as the Proton donor; for delta-elimination activity in the catalytic mechanism.

This sequence belongs to the FPG family. As to quaternary structure, monomer. Requires Zn(2+) as cofactor.

It carries out the reaction Hydrolysis of DNA containing ring-opened 7-methylguanine residues, releasing 2,6-diamino-4-hydroxy-5-(N-methyl)formamidopyrimidine.. It catalyses the reaction 2'-deoxyribonucleotide-(2'-deoxyribose 5'-phosphate)-2'-deoxyribonucleotide-DNA = a 3'-end 2'-deoxyribonucleotide-(2,3-dehydro-2,3-deoxyribose 5'-phosphate)-DNA + a 5'-end 5'-phospho-2'-deoxyribonucleoside-DNA + H(+). Involved in base excision repair of DNA damaged by oxidation or by mutagenic agents. Acts as a DNA glycosylase that recognizes and removes damaged bases. Has a preference for oxidized purines, such as 7,8-dihydro-8-oxoguanine (8-oxoG). Has AP (apurinic/apyrimidinic) lyase activity and introduces nicks in the DNA strand. Cleaves the DNA backbone by beta-delta elimination to generate a single-strand break at the site of the removed base with both 3'- and 5'-phosphates. The polypeptide is Formamidopyrimidine-DNA glycosylase (Bacillus cereus (strain ATCC 10987 / NRS 248)).